Consider the following 352-residue polypeptide: Histidinol-phosphate aminotransferase (352 aa).

K221 carries the post-translational modification N6-(pyridoxal phosphate)lysine.

Belongs to the class-II pyridoxal-phosphate-dependent aminotransferase family. Histidinol-phosphate aminotransferase subfamily. As to quaternary structure, homodimer. It depends on pyridoxal 5'-phosphate as a cofactor.

It catalyses the reaction L-histidinol phosphate + 2-oxoglutarate = 3-(imidazol-4-yl)-2-oxopropyl phosphate + L-glutamate. Its pathway is amino-acid biosynthesis; L-histidine biosynthesis; L-histidine from 5-phospho-alpha-D-ribose 1-diphosphate: step 7/9. This is Histidinol-phosphate aminotransferase from Staphylococcus aureus (strain MSSA476).